The following is a 323-amino-acid chain: Cyclin-H (323 aa).

A Phosphoserine; by CDK8 modification is found at Ser5. A Phosphoserine modification is found at Ser132. A disordered region spans residues 299-323 (DDDYVPKKSKHEEEEWTDDDLVESL). A compositionally biased stretch (basic and acidic residues) spans 302-311 (YVPKKSKHEE). Acidic residues predominate over residues 312–323 (EEWTDDDLVESL). A Phosphothreonine modification is found at Thr315. At Ser322 the chain carries Phosphoserine.

This sequence belongs to the cyclin family. Cyclin C subfamily. In terms of assembly, associates primarily with CDK7 and MAT1 to form the CAK complex. CAK can further associate with the core-TFIIH to form the TFIIH basal transcription factor.

It is found in the nucleus. Functionally, regulates CDK7, the catalytic subunit of the CDK-activating kinase (CAK) enzymatic complex. CAK activates the cyclin-associated kinases CDK1, CDK2, CDK4 and CDK6 by threonine phosphorylation. CAK complexed to the core-TFIIH basal transcription factor activates RNA polymerase II by serine phosphorylation of the repetitive C-terminal domain (CTD) of its large subunit (POLR2A), allowing its escape from the promoter and elongation of the transcripts. Involved in cell cycle control and in RNA transcription by RNA polymerase II. Its expression and activity are constant throughout the cell cycle. This is Cyclin-H (CCNH) from Macaca fascicularis (Crab-eating macaque).